An 81-amino-acid polypeptide reads, in one-letter code: CLAVATA3/ESR (CLE)-related protein 12 (81 aa).

Positions Met-1 to Arg-31 are cleaved as a signal peptide. The span at Lys-55–Pro-67 shows a compositional bias: basic and acidic residues. The tract at residues Lys-55 to Asn-81 is disordered. 2 positions are modified to hydroxyproline: Pro-73 and Pro-76. Pro-76 is a glycosylation site (O-linked (Ara...) hydroxyproline).

This sequence belongs to the CLV3/ESR signal peptide family. The O-glycosylation (arabinosylation) of the hydroxyproline Pro-76 enhances binding affinity of the CLE12p peptide for its receptor. As to expression, expressed in young nodules throughout the central tissue. Expressed in the apical region of elongated nodules, corresponding to the meristematic and early infection zones.

The protein resides in the secreted. Its subcellular location is the extracellular space. Functionally, signaling peptide involved in the regulation of nodulation. Moves from root to shoot to function with the receptor kinase SUNN, in a signaling pathway that plays roles during cellular differentiation, both at the onset of nodulation, and later during nodule meristem development and subsequent homeostasis. Interacts with SUNN signaling to control nodule numbers. SUNN is involved in the autoregulation of nodulation (AON), a long distance systemic signaling from root to shoot and back again, which allows legumes to limit the number of root nodules formed based on available nitrogen and previous rhizobial colonization. The polypeptide is CLAVATA3/ESR (CLE)-related protein 12 (Medicago truncatula (Barrel medic)).